The following is a 993-amino-acid chain: Synaptonemal complex protein 1 (993 aa).

Residues 98–108 carry the Mediates head to head self-assembly of N-terminal ends motif; sequence PMSRLYSKLYK. The Nuclear localization signal signature appears at 114-117; sequence KKWK. Coiled coils occupy residues 117-172 and 215-688; these read KVSI…LIKE and IEKM…EIEN. Residues 203–359 are interaction with SYCE3; it reads ETRQVYVDLN…SQLTEVKEAQ (157 aa). Residues 694 to 788 are required for pH-induced assembly of C-terminal ends into antiparallel tetramers; sequence GKLLGEVEKA…VSLKKQLEIE (95 aa). The Nuclear localization signal motif lies at 697–700; sequence LGEV. Positions 764 to 808 form a coiled coil; that stretch reads KIALETELSNIRNELVSLKKQLEIEKEEKEKLKMAKENTAILKDK. Residues 801 to 993 are DNA-binding; sequence NTAILKDKKD…RLKEAEKLFS (193 aa). The residue at position 820 (S820) is a Phosphoserine. Residues 824-861 are disordered; sequence TSWKFDSKTTPSQNISRLSSSMDSGKSKDNRDNLRASA. Residues 831-847 show a composition bias toward polar residues; it reads KTTPSQNISRLSSSMDS. Residues 848 to 857 show a composition bias toward basic and acidic residues; sequence GKSKDNRDNL. The Nuclear localization signal signature appears at 898–901; it reads KKRK.

In terms of assembly, structural component of synaptonemal complexes. Homotetramer that consists of an N-terminal four-helical bundle that bifurcates into two elongated C-terminal dimeric coiled coils. This tetrameric building block potentially self-assembles into a supramolecular zipper-like lattice to mediate meiotic chromosome synapsis. Self-assembly is likely initiated by local proton density at chromosome axis, which is predicted to trigger antiparallel back to back assembly of adjacent C-terminal ends into tetrameric structures that anchor to chromosomal DNA. Then the N-terminal ends are predicted to undergo cooperative antiparallel head to head assembly at the midline of synaptonemal complexes central element to form a zipper-like lattice between properly aligned homologous chromosomes. The nascent synapsis generated by SYCP1 is stabilized through interaction with central element proteins SYCE1 and SYCE2. Interacts (via tetrameric core) with SYCE3; the interaction remodels SYCP1 homotetramers to 2:1 heterotrimers with SYCE3. SYCP1/SYCE3 heterotrimers form lattice assemblies as part of the mature synaptonemal complex via both lateral and head-to-head interactions. Forms a complex with EWSR1, PRDM9, SYCP3 and REC8; complex formation is dependent of phosphorylated form of REC8 and requires PRDM9 bound to hotspot DNA; EWSR1 joins PRDM9 with the chromosomal axis through REC8. Interacts with SPO16. In terms of tissue distribution, detected in testis. Detected in spermatocytes (at protein level).

The protein resides in the nucleus. It is found in the chromosome. It localises to the centromere. Functionally, major component of the transverse filaments of synaptonemal complexes, formed between homologous chromosomes during meiotic prophase. Required for normal assembly of the central element of the synaptonemal complexes. Required for normal centromere pairing during meiosis. Required for normal meiotic chromosome synapsis during oocyte and spermatocyte development and for normal male and female fertility. The polypeptide is Synaptonemal complex protein 1 (Mus musculus (Mouse)).